Consider the following 765-residue polypeptide: ATP-dependent zinc metalloprotease FtsH (765 aa).

Residues 1–27 lie on the Cytoplasmic side of the membrane; sequence MSNTSNFNERVTENAKPPKNVKSIIWK. The helical transmembrane segment at 28–48 threads the bilayer; it reads TIGIIIVMAIIIGLILFYVLP. The Extracellular portion of the chain corresponds to 49–213; it reads RNTIANISNI…NVQLPNQSTA (165 aa). A helical transmembrane segment spans residues 214 to 234; the sequence is ILTQFLTSIIPFVILIVIYIV. At 235 to 765 the chain is on the cytoplasmic side; it reads IARRFSRTMG…EPTASTASSN (531 aa). 314-321 contacts ATP; that stretch reads GPPGTGKT. Residue histidine 536 coordinates Zn(2+). Residue glutamate 537 is part of the active site. Residues histidine 540 and aspartate 615 each contribute to the Zn(2+) site. Positions 730–748 are enriched in basic and acidic residues; the sequence is KAAAEKEEQAEKAKLDHQS. A disordered region spans residues 730–765; that stretch reads KAAAEKEEQAEKAKLDHQSDSAQPQEEPTASTASSN. Residues 749-765 are compositionally biased toward polar residues; it reads DSAQPQEEPTASTASSN.

This sequence in the central section; belongs to the AAA ATPase family. The protein in the C-terminal section; belongs to the peptidase M41 family. As to quaternary structure, homohexamer. Zn(2+) serves as cofactor.

The protein localises to the cell membrane. Acts as a processive, ATP-dependent zinc metallopeptidase for both cytoplasmic and membrane proteins. Plays a role in the quality control of integral membrane proteins. In Mycoplasmoides gallisepticum (strain R(high / passage 156)) (Mycoplasma gallisepticum), this protein is ATP-dependent zinc metalloprotease FtsH.